Reading from the N-terminus, the 3066-residue chain is Genome polyprotein (3066 aa).

The Peptidase S30 domain occupies 168-308; the sequence is TSQCRKPTYV…VENMEDIQHY (141 aa). Residues His221, Glu230, and Ser262 each act as for P1 proteinase activity in the active site. An Involved in interaction with stylet and aphid transmission motif is present at residues 361–364; the sequence is KLSC. The short motif at 617–619 is the Involved in virions binding and aphid transmission element; it reads PTK. The 123-residue stretch at 643–765 folds into the Peptidase C6 domain; that stretch reads MYIAKEGFCY…QSEMKFYRVG (123 aa). Catalysis depends on for helper component proteinase activity residues Cys651 and His724. Residues 1236–1388 form the Helicase ATP-binding domain; the sequence is LVATSSHTEF…TQHPVKLKVE (153 aa). ATP is bound at residue 1249–1256; sequence GAVGSGKS. The DECH box motif lies at 1338–1341; the sequence is DECH. The region spanning 1407 to 1566 is the Helicase C-terminal domain; sequence DMIQHGNNLL…GLPVTTQSVS (160 aa). The Nuclear localization signal motif lies at 1891-1900; it reads KKGKQKGSTR. Residue Tyr1915 is modified to O-(5'-phospho-RNA)-tyrosine. Positions 2042-2260 constitute a Peptidase C4 domain; sequence SKSVYKGLRD…IAWGSLNLVE (219 aa). Residues His2087, Asp2122, and Cys2192 each act as for nuclear inclusion protein A activity in the active site. The region spanning 2526-2650 is the RdRp catalytic domain; the sequence is WVYCHADGSQ…AVSDKDTWLY (125 aa). Residues 2799–2836 form a disordered region; sequence SLQSGKEKEGDMDADKDPKKSTSSSKGAGTSSKDVNVG. A compositionally biased stretch (basic and acidic residues) spans 2803–2818; that stretch reads GKEKEGDMDADKDPKK. The span at 2819–2831 shows a compositional bias: low complexity; that stretch reads STSSSKGAGTSSK. Thr3048 is subject to Phosphothreonine.

This sequence belongs to the potyviridae genome polyprotein family. Interacts with host eIF4E protein (via cap-binding region); this interaction mediates the translation of the VPg-viral RNA conjugates. Part of a complex that comprises VPg, RNA, host EIF4E and EIF4G; this interaction mediates the translation of the VPg-viral RNA conjugates. In terms of assembly, interacts with host eIF4E proteins in the host cytoplasm. Post-translationally, VPg is uridylylated by the polymerase and is covalently attached to the 5'-end of the genomic RNA. This uridylylated form acts as a nucleotide-peptide primer for the polymerase. Potyviral RNA is expressed as two polyproteins which undergo post-translational proteolytic processing. Genome polyprotein is processed by NIa-pro, P1 and HC-pro proteinases resulting in the production of at least ten individual proteins. P3N-PIPO polyprotein is cleaved by P1 and HC-pro proteinases resulting in the production of three individual proteins. The P1 proteinase and the HC-pro cleave only their respective C-termini autocatalytically. 6K1 is essential for proper proteolytic separation of P3 from CI.

It localises to the host cytoplasmic vesicle. Its subcellular location is the host cytoplasm. The protein resides in the host nucleus. It is found in the virion. It carries out the reaction RNA(n) + a ribonucleoside 5'-triphosphate = RNA(n+1) + diphosphate. The enzyme catalyses Hydrolyzes glutaminyl bonds, and activity is further restricted by preferences for the amino acids in P6 - P1' that vary with the species of potyvirus, e.g. Glu-Xaa-Xaa-Tyr-Xaa-Gln-|-(Ser or Gly) for the enzyme from tobacco etch virus. The natural substrate is the viral polyprotein, but other proteins and oligopeptides containing the appropriate consensus sequence are also cleaved.. The catalysed reaction is Hydrolyzes a Gly-|-Gly bond at its own C-terminus, commonly in the sequence -Tyr-Xaa-Val-Gly-|-Gly, in the processing of the potyviral polyprotein.. Its function is as follows. Required for aphid transmission and also has proteolytic activity. Only cleaves a Gly-Gly dipeptide at its own C-terminus. Interacts with virions and aphid stylets. Acts as a suppressor of RNA-mediated gene silencing, also known as post-transcriptional gene silencing (PTGS), a mechanism of plant viral defense that limits the accumulation of viral RNAs. May have RNA-binding activity. Has helicase activity. It may be involved in replication. In terms of biological role, indispensable for virus replication. Reduces the abundance of host transcripts related to jasmonic acid biosynthesis therefore altering the host defenses. In order to increase its own stability, decreases host protein degradation pathways. Functionally, indispensable for virus replication. Its function is as follows. Mediates the cap-independent, EIF4E-dependent translation of viral genomic RNAs. Binds to the cap-binding site of host EIF4E and thus interferes with the host EIF4E-dependent mRNA export and translation. VPg-RNA directly binds EIF4E and is a template for transcription. Also forms trimeric complexes with EIF4E-EIF4G, which are templates for translation. Has RNA-binding and proteolytic activities. In terms of biological role, an RNA-dependent RNA polymerase that plays an essential role in the virus replication. Functionally, involved in aphid transmission, cell-to-cell and systemis movement, encapsidation of the viral RNA and in the regulation of viral RNA amplification. The protein is Genome polyprotein of Glycine max (Soybean).